The chain runs to 371 residues: Epoxyqueuosine reductase (371 aa).

The active-site Proton donor is the Asp137. The 4Fe-4S ferredoxin-type domain occupies 179-211 (IPLPVDTPVENQCGKCTACISSCPTNAILENGV). Residues Cys191, Cys194, Cys197, Cys201, Cys217, Cys244, Cys247, and Cys251 each coordinate [4Fe-4S] cluster.

Belongs to the QueG family. In terms of assembly, monomer. Cob(II)alamin serves as cofactor. [4Fe-4S] cluster is required as a cofactor.

Its subcellular location is the cytoplasm. It catalyses the reaction epoxyqueuosine(34) in tRNA + AH2 = queuosine(34) in tRNA + A + H2O. Its pathway is tRNA modification; tRNA-queuosine biosynthesis. Functionally, catalyzes the conversion of epoxyqueuosine (oQ) to queuosine (Q), which is a hypermodified base found in the wobble positions of tRNA(Asp), tRNA(Asn), tRNA(His) and tRNA(Tyr). In Aliivibrio fischeri (strain ATCC 700601 / ES114) (Vibrio fischeri), this protein is Epoxyqueuosine reductase.